A 759-amino-acid polypeptide reads, in one-letter code: Forkhead box protein M1 (759 aa).

The interval M1–S92 is disordered. Positions L48–Q63 are enriched in basic and acidic residues. Residues R260 to D358 constitute a DNA-binding region (fork-head). Disordered regions lie at residues A420–G450, S516–V535, and K596–V631. Low complexity predominate over residues K601–T612.

In terms of tissue distribution, localized to the animal hemisphere of early cleavage stage embryos. During neurulation, expressed in the neural folds. Later, expressed in the spinal cord and in the eye field. During tailbud stages, expression is still restricted to the neuroectoderm, predominantly to the hindbrain, the eye and the spinal cord. With ongoing development, expression is also found at lower levels in the branchial arches. At stage 35, expressed in the rhombencephalon and in the eye retina.

Its subcellular location is the nucleus. Transcription factor regulating the expression of cell cycle genes essential for DNA replication and mitosis. Plays a role in the control of cell proliferation. Also plays a role in DNA break repair, participating in the DNA damage checkpoint response. Promotes transcription of PHB2. The protein is Forkhead box protein M1 of Xenopus laevis (African clawed frog).